A 525-amino-acid polypeptide reads, in one-letter code: NAD(P)H-quinone oxidoreductase chain 4-1 (525 aa).

The next 14 helical transmembrane spans lie at F4 to I24, L37 to L57, L89 to L109, P111 to V131, I134 to I154, F167 to F187, L210 to H230, T241 to L261, A273 to T293, I309 to G329, A330 to A350, L385 to T405, I416 to L436, and V462 to I482.

This sequence belongs to the complex I subunit 4 family.

Its subcellular location is the cellular thylakoid membrane. The enzyme catalyses a plastoquinone + NADH + (n+1) H(+)(in) = a plastoquinol + NAD(+) + n H(+)(out). It carries out the reaction a plastoquinone + NADPH + (n+1) H(+)(in) = a plastoquinol + NADP(+) + n H(+)(out). Its function is as follows. NDH-1 shuttles electrons from NAD(P)H, via FMN and iron-sulfur (Fe-S) centers, to quinones in the respiratory chain. The immediate electron acceptor for the enzyme in this species is believed to be plastoquinone. Couples the redox reaction to proton translocation (for every two electrons transferred, four hydrogen ions are translocated across the cytoplasmic membrane), and thus conserves the redox energy in a proton gradient. The polypeptide is NAD(P)H-quinone oxidoreductase chain 4-1 (ndhD1) (Synechocystis sp. (strain ATCC 27184 / PCC 6803 / Kazusa)).